A 347-amino-acid chain; its full sequence is MPRGQKSKLRAREKRRQARGGLEDLIDALDILEEEEESPPSASACLKDVFQSSLDGASNNPHGLREAQSTSTSATAASHTRHPEGVNDQMEERPICTQDLEATDSFPRGPVDEKVIILVHYLLYKYQMKEPITKADMLRNVTQMSKSQFPVILSRASEHLELIFGLDLKEVEPNKHIYVLVNKLDLGCDAKLSDETGVPKTGLLMTVLGIIFTNGNCVAEEEVWKVFNTMGLYDGIEHFMFGEPRKLLTKDLVKENYLEYQQVPNSDPPRYQFLWGPRAHAETSKMKVLEFLAKVNDTAPSEFSNWYTEALQDEEERARARVAAKARVSATAGARSKVKSSKSSQLQ.

Residues 1 to 18 show a composition bias toward basic residues; sequence MPRGQKSKLRAREKRRQA. Disordered regions lie at residues 1–20 and 56–92; these read MPRGQKSKLRAREKRRQARG and GASNNPHGLREAQSTSTSATAASHTRHPEGVNDQMEE. Residues 67 to 78 show a composition bias toward low complexity; it reads AQSTSTSATAAS. Over residues 81–92 the composition is skewed to basic and acidic residues; the sequence is RHPEGVNDQMEE. The 200-residue stretch at 111 to 310 folds into the MAGE domain; that stretch reads VDEKVIILVH…SEFSNWYTEA (200 aa). The disordered stretch occupies residues 328-347; it reads VSATAGARSKVKSSKSSQLQ.

This is Melanoma-associated antigen B10 (MAGEB10) from Homo sapiens (Human).